Consider the following 333-residue polypeptide: Methylosome protein WDR77 (333 aa).

WD repeat units follow at residues 16–59, 68–106, 113–152, 155–195, 199–240, 243–283, and 285–328; these read CMEV…GAPN, QTEA…SLLV, EHDD…VLKS, AHSS…PATR, CASD…SAQT, VHSQ…VFRD, and SHRD…NLIA.

As to quaternary structure, heterotetramer; dimer of heterodimer with prmt5. Interacts with histone h2a and h4 and with nucleoplasmin. Detected in egg (at protein level).

The protein localises to the cytoplasm. It is found in the nucleus. Its function is as follows. Non-catalytic component of the 20S prmt5-containing methyltransferase complex, which modifies specific arginines to dimethylarginines in several spliceosomal Sm proteins and histones. Required for normal prmt5 methyltransferase activity. This is Methylosome protein WDR77 from Xenopus laevis (African clawed frog).